The chain runs to 161 residues: RNA pyrophosphohydrolase (161 aa).

The Nudix hydrolase domain maps to 12–154; sequence PYRPGVGMMI…KRKLYQAVVK (143 aa). The short motif at 46 to 67 is the Nudix box element; it reads GGIVPGETPSIAAMREMLEEIG.

It belongs to the Nudix hydrolase family. RppH subfamily. The cofactor is a divalent metal cation.

Accelerates the degradation of transcripts by removing pyrophosphate from the 5'-end of triphosphorylated RNA, leading to a more labile monophosphorylated state that can stimulate subsequent ribonuclease cleavage. This is RNA pyrophosphohydrolase from Rickettsia canadensis (strain McKiel).